The primary structure comprises 123 residues: Ribosome-binding factor A (123 aa).

It belongs to the RbfA family. As to quaternary structure, monomer. Binds 30S ribosomal subunits, but not 50S ribosomal subunits or 70S ribosomes.

It is found in the cytoplasm. Its function is as follows. One of several proteins that assist in the late maturation steps of the functional core of the 30S ribosomal subunit. Associates with free 30S ribosomal subunits (but not with 30S subunits that are part of 70S ribosomes or polysomes). Required for efficient processing of 16S rRNA. May interact with the 5'-terminal helix region of 16S rRNA. This chain is Ribosome-binding factor A, found in Ralstonia pickettii (strain 12J).